Here is an 823-residue protein sequence, read N- to C-terminus: MVSWDSGCLICLVVVTMAGLSLARPSFNLVVEDATLEPEEPPTKYQISQPDVHSALPGEPLELRCQLKDAVMISWTKDGVPLGPDNRTVIIGEYLQIKDASPRDSGLYACTAIRTLDSDTLYFIVNVTDALSSGDDEDDNDGSEDFVNDSNQMRAPYWTHTDKMEKRLHAVPAANTVKFRCPAMGNPTPTMRWLKNGKEFKQEHRIGGYKVRNQHWSLIMESVVPSDKGNYTCIVENQYGSINHTYHLDVVERSPHRPILQAGLPANASAVVGGDVEFVCKVYSDAQPHIQWIKHVERNGSKYGPDGLPYLQVLKAAGVNTTDKEIEVLYIRNVTFEDAGEYTCLAGNSIGISFHTAWLTVLPAPEKEKEFPTSPDYLEIAIYCIGVFLIACMVLTVILCRMKNTTKKPDFSSQPAVHKLTKRIPLRRQVTVSADSSSSMNSNTPLVRITTRLSSTADAPMLAGVSEYELPEDPKWEFPRDKLTLGKPLGEGCFGQVVMAEAVGIDKDRPKEAVTVAVKMLKDDATEKDLSDLVSEMEMMKMIGKHKNIINLLGACTQDGPLYVIVEYASKGNLREYLRARRPPGMEYSFDINRVPEEQMTFKDLVSCTYQLARGMEYLASQKCIHRDLAARNVLVTENNVMKIADFGLARDINNIDYYKKTTNGRLPVKWMAPEALFDRVYTHQSDVWSFGVLMWEIFTLGGSPYPGIPVEELFKLLKEGHRMDKPANCTNELYMMMRDCWQAVPSQRPTFKQLVEDLDRILTLTTNEEYLDLSGPLEQYSPSYPDTRSSCSSGDDSVFSPDPMPYEPCLPKYQHMNGSVKT.

A signal peptide spans 1 to 23; the sequence is MVSWDSGCLICLVVVTMAGLSLA. Residues 24-379 are Extracellular-facing; the sequence is RPSFNLVVED…EFPTSPDYLE (356 aa). An Ig-like C2-type 1 domain is found at 27–128; that stretch reads FNLVVEDATL…DTLYFIVNVT (102 aa). Residues C65 and C110 are joined by a disulfide bond. N-linked (GlcNAc...) asparagine glycosylation is found at N86, N126, and N148. 2 consecutive Ig-like C2-type domains span residues 156–249 and 258–360; these read PYWT…YHLD and PILQ…AWLT. The segment at 163–180 is heparin-binding; it reads KMEKRLHAVPAANTVKFR. An intrachain disulfide couples C181 to C233. N-linked (GlcNAc...) asparagine glycosylation is found at N230, N243, N267, N299, N320, and N333. The cysteines at positions 280 and 344 are disulfide-linked. A helical membrane pass occupies residues 380–400; sequence IAIYCIGVFLIACMVLTVILC. At 401–823 the chain is on the cytoplasmic side; the sequence is RMKNTTKKPD…YQHMNGSVKT (423 aa). Y468 carries the post-translational modification Phosphotyrosine; by autocatalysis. The 290-residue stretch at 483-772 folds into the Protein kinase domain; that stretch reads LTLGKPLGEG…LTLTTNEEYL (290 aa). ATP contacts are provided by residues 489-497, K519, 567-569, and N573; these read LGEGCFGQV and EYA. The residue at position 588 (Y588) is a Phosphotyrosine; by autocatalysis. The active-site Proton acceptor is the D628. 3 positions are modified to phosphotyrosine; by autocatalysis: Y658, Y659, and Y771.

This sequence belongs to the protein kinase superfamily. Tyr protein kinase family. Fibroblast growth factor receptor subfamily. As to quaternary structure, monomer. Homodimer after ligand binding. Autophosphorylated. Binding of FGF family members together with heparan sulfate proteoglycan or heparin promotes receptor dimerization and autophosphorylation on tyrosine residues. Autophosphorylation occurs in trans between the two FGFR molecules present in the dimer. Post-translationally, N-glycosylated in the endoplasmic reticulum. The N-glycan chains undergo further maturation to an Endo H-resistant form in the Golgi apparatus. In terms of processing, ubiquitinated. FGFR2 is rapidly ubiquitinated after autophosphorylation, leading to internalization and degradation. Subject to degradation both in lysosomes and by the proteasome.

The protein localises to the cell membrane. It localises to the golgi apparatus. The protein resides in the cytoplasmic vesicle. It catalyses the reaction L-tyrosyl-[protein] + ATP = O-phospho-L-tyrosyl-[protein] + ADP + H(+). Present in an inactive conformation in the absence of bound ligand. Ligand binding leads to dimerization and activation by autophosphorylation on tyrosine residues. In terms of biological role, tyrosine-protein kinase that acts as a cell-surface receptor for fibroblast growth factors and plays an essential role in the regulation of cell proliferation, differentiation, migration and apoptosis, and in the regulation of embryonic development. Required for normal embryonic patterning, limb bud development, lung morphogenesis, osteogenesis and skin development. Plays an essential role in the regulation of osteoblast differentiation, proliferation and apoptosis, and is required for normal skeleton development. Promotes cell proliferation in keratinocytes and immature osteoblasts, but promotes apoptosis in differentiated osteoblasts. Phosphorylates PLCG1, FRS2 and PAK4. Ligand binding leads to the activation of several signaling cascades. Activation of PLCG1 leads to the production of the cellular signaling molecules diacylglycerol and inositol 1,4,5-trisphosphate. Phosphorylation of FRS2 triggers recruitment of GRB2, GAB1, PIK3R1 and SOS1, and mediates activation of RAS, MAPK1/ERK2, MAPK3/ERK1 and the MAP kinase signaling pathway, as well as of the AKT1 signaling pathway. FGFR2 signaling is down-regulated by ubiquitination, internalization and degradation. Mutations that lead to constitutive kinase activation or impair normal FGFR2 maturation, internalization and degradation lead to aberrant signaling. Over-expressed FGFR2 promotes activation of STAT1. This chain is Fibroblast growth factor receptor 2 (FGFR2), found in Gallus gallus (Chicken).